Reading from the N-terminus, the 1144-residue chain is Probable translation initiation factor IF-2 (1144 aa).

In terms of domain architecture, DOD-type homing endonuclease spans 232–362 (FAGVMFGDGS…LSLLLLRFGI (131 aa)). A tr-type G domain is found at 551–768 (TTETHNFVAN…LIAGLSQKYL (218 aa)). GTP contacts are provided by residues 624 to 628 (DTPGH) and 678 to 681 (NKID).

Belongs to the TRAFAC class translation factor GTPase superfamily. Classic translation factor GTPase family. IF-2 subfamily. In terms of processing, this protein undergoes a protein self splicing that involves a post-translational excision of the intervening region (intein) followed by peptide ligation.

Its function is as follows. Function in general translation initiation by promoting the binding of the formylmethionine-tRNA to ribosomes. Seems to function along with eIF-2. This is Probable translation initiation factor IF-2 (infB) from Thermococcus kodakarensis (strain ATCC BAA-918 / JCM 12380 / KOD1) (Pyrococcus kodakaraensis (strain KOD1)).